Reading from the N-terminus, the 304-residue chain is Small ribosomal subunit biogenesis GTPase RsgA (304 aa).

The CP-type G domain maps to 78–237; sequence HSFLTRPPVA…VADTPGFNRP (160 aa). GTP contacts are provided by residues 127–130 and 179–187; these read TKTD and GPSGVGKSS. Residues C262, C267, H269, and C275 each contribute to the Zn(2+) site.

It belongs to the TRAFAC class YlqF/YawG GTPase family. RsgA subfamily. In terms of assembly, monomer. Associates with 30S ribosomal subunit, binds 16S rRNA. Zn(2+) serves as cofactor.

It localises to the cytoplasm. In terms of biological role, one of several proteins that assist in the late maturation steps of the functional core of the 30S ribosomal subunit. Helps release RbfA from mature subunits. May play a role in the assembly of ribosomal proteins into the subunit. Circularly permuted GTPase that catalyzes slow GTP hydrolysis, GTPase activity is stimulated by the 30S ribosomal subunit. In Synechococcus sp. (strain CC9605), this protein is Small ribosomal subunit biogenesis GTPase RsgA.